The primary structure comprises 662 residues: Protein Aster-C (662 aa).

Residues 1–34 (MEGAPTVRQVMNEGDSSLATDLQEDVEENPSPTV) are disordered. The region spanning 69 to 136 (EEYRRQFTHL…KNITFMTKEK (68 aa)) is the GRAM domain. Disordered regions lie at residues 212–237 (SIED…EKLS) and 249–284 (RVSE…LPTL). The segment covering 265-276 (LGKEESQNEKQT) has biased composition (basic and acidic residues). The region spanning 326–497 (HGRLFINRIF…DLLIEESVLN (172 aa)) is the VASt domain. Residues 557–577 (LIVVMSIFVLLLVLLNVTLFL) form a helical membrane-spanning segment.

It is found in the endoplasmic reticulum membrane. Its subcellular location is the cell membrane. Functionally, cholesterol transporter that mediates non-vesicular transport of cholesterol from the plasma membrane (PM) to the endoplasmic reticulum (ER). Contains unique domains for binding cholesterol and the PM, thereby serving as a molecular bridge for the transfer of cholesterol from the PM to the ER. Plays a crucial role in cholesterol homeostasis and has the unique ability to localize to the PM based on the level of membrane cholesterol. In lipid-poor conditions localizes to the ER membrane and in response to excess cholesterol in the PM is recruited to the endoplasmic reticulum-plasma membrane contact sites (EPCS) which is mediated by the GRAM domain. At the EPCS, the sterol-binding VASt/ASTER domain binds to the cholesterol in the PM and facilitates its transfer from the PM to ER. The protein is Protein Aster-C (GRAMD1C) of Homo sapiens (Human).